Consider the following 320-residue polypeptide: Acetyl-coenzyme A carboxylase carboxyl transferase subunit alpha (320 aa).

In terms of domain architecture, CoA carboxyltransferase C-terminal spans 42-295 (IEDKAKAALH…GDAIAQAFSD (254 aa)).

The protein belongs to the AccA family. In terms of assembly, acetyl-CoA carboxylase is a heterohexamer composed of biotin carboxyl carrier protein (AccB), biotin carboxylase (AccC) and two subunits each of ACCase subunit alpha (AccA) and ACCase subunit beta (AccD).

It localises to the cytoplasm. The catalysed reaction is N(6)-carboxybiotinyl-L-lysyl-[protein] + acetyl-CoA = N(6)-biotinyl-L-lysyl-[protein] + malonyl-CoA. It participates in lipid metabolism; malonyl-CoA biosynthesis; malonyl-CoA from acetyl-CoA: step 1/1. Component of the acetyl coenzyme A carboxylase (ACC) complex. First, biotin carboxylase catalyzes the carboxylation of biotin on its carrier protein (BCCP) and then the CO(2) group is transferred by the carboxyltransferase to acetyl-CoA to form malonyl-CoA. This chain is Acetyl-coenzyme A carboxylase carboxyl transferase subunit alpha, found in Afipia carboxidovorans (strain ATCC 49405 / DSM 1227 / KCTC 32145 / OM5) (Oligotropha carboxidovorans).